Reading from the N-terminus, the 103-residue chain is Small ribosomal subunit protein uS10 (103 aa).

It belongs to the universal ribosomal protein uS10 family. Part of the 30S ribosomal subunit.

In terms of biological role, involved in the binding of tRNA to the ribosomes. The polypeptide is Small ribosomal subunit protein uS10 (Colwellia psychrerythraea (strain 34H / ATCC BAA-681) (Vibrio psychroerythus)).